The primary structure comprises 740 residues: Melanoma-associated antigen D4 (740 aa).

Positions methionine 1–glutamate 11 are enriched in basic and acidic residues. 4 disordered regions span residues methionine 1–glutamate 27, alanine 139–threonine 208, proline 242–lysine 298, and isoleucine 321–proline 377. A compositionally biased stretch (acidic residues) spans asparagine 14 to glutamate 27. Polar residues-rich tracts occupy residues histidine 141 to alanine 155 and proline 162 to leucine 175. A compositionally biased stretch (low complexity) spans alanine 185–serine 207. The span at isoleucine 321–proline 337 shows a compositional bias: low complexity. Residues aspartate 354 to arginine 363 show a composition bias toward acidic residues. An MAGE domain is found at leucine 414–alanine 612. Residues tryptophan 697–threonine 722 are disordered.

As to quaternary structure, interacts with TRIM27.

Its function is as follows. May enhance ubiquitin ligase activity of RING-type zinc finger-containing E3 ubiquitin-protein ligases. Proposed to act through recruitment and/or stabilization of the Ubl-conjugating enzyme (E2) at the E3:substrate complex. The sequence is that of Melanoma-associated antigen D4 (MAGED4) from Bos taurus (Bovine).